We begin with the raw amino-acid sequence, 343 residues long: Multidrug resistance protein MdtN (343 aa).

Residues 1–12 (MESTPKKAPRSK) are Cytoplasmic-facing. Residues 13–33 (FPALLVVALALVALVFVIWRV) traverse the membrane as a helical; Signal-anchor for type II membrane protein segment. At 34–343 (DSAPSTNDAY…ASAVANLEPQ (310 aa)) the chain is on the periplasmic side.

The protein belongs to the membrane fusion protein (MFP) (TC 8.A.1) family. Could be part of a tripartite efflux system composed of MdtN, MdtO and MdtP.

The protein localises to the cell inner membrane. Could be involved in resistance to puromycin, acriflavine and tetraphenylarsonium chloride. The chain is Multidrug resistance protein MdtN (mdtN) from Escherichia coli O157:H7.